Consider the following 280-residue polypeptide: Energy-coupling factor transporter ATP-binding protein EcfA1 (280 aa).

One can recognise an ABC transporter domain in the interval 6–241 (LRTENISFQY…SHMLQEIGLD (236 aa)). 40–47 (GQNGSGKS) provides a ligand contact to ATP.

It belongs to the ABC transporter superfamily. Energy-coupling factor EcfA family. Forms a stable energy-coupling factor (ECF) transporter complex composed of 2 membrane-embedded substrate-binding proteins (S component), 2 ATP-binding proteins (A component) and 2 transmembrane proteins (T component).

Its subcellular location is the cell membrane. ATP-binding (A) component of a common energy-coupling factor (ECF) ABC-transporter complex. Unlike classic ABC transporters this ECF transporter provides the energy necessary to transport a number of different substrates. This is Energy-coupling factor transporter ATP-binding protein EcfA1 from Bacillus cereus (strain ZK / E33L).